Consider the following 361-residue polypeptide: Divinyl chlorophyll a/b light-harvesting protein PcbD (361 aa).

The next 6 membrane-spanning stretches (helical) occupy residues 27 to 47 (FIASHVGHTGLICFAAGGSTL), 93 to 113 (IVHLILSMVYGGGGLLHGILF), 140 to 160 (FILGHHLIFMGVACAWFVEWA), 201 to 221 (VMGGHAFLAFAEITGGAFHIV), 248 to 268 (AVLSWSLAGIGWMAIVAAFWC), and 315 to 335 (LTNVHYYLGFFFLQGHFWHAL).

The protein belongs to the PsbB/PsbC family. IsiA/Pcb subfamily. As to quaternary structure, the antenna complex consists of divinyl chlorophylls (a and b) and divinyl chlorophyll a/b binding proteins and binds more divinyl chlorophyll b than does the antenna complex from high-light-adapted Prochlorococcus. Divinyl chlorophyll a is required as a cofactor. Requires divinyl chlorophyll b as cofactor.

The protein localises to the cellular thylakoid membrane. Functionally, the antenna complex functions as a light receptor, it captures and delivers excitation energy to photosystems II and I. The Prochlorales pcb genes are not related to higher plant LHCs. In Prochlorococcus marinus (strain SARG / CCMP1375 / SS120), this protein is Divinyl chlorophyll a/b light-harvesting protein PcbD (pcbD).